Reading from the N-terminus, the 85-residue chain is ATP synthase subunit c (85 aa).

The next 2 membrane-spanning stretches (helical) occupy residues Ile-10 to Leu-30 and Phe-53 to Phe-73.

The protein belongs to the ATPase C chain family. F-type ATPases have 2 components, F(1) - the catalytic core - and F(0) - the membrane proton channel. F(1) has five subunits: alpha(3), beta(3), gamma(1), delta(1), epsilon(1). F(0) has three main subunits: a(1), b(2) and c(10-14). The alpha and beta chains form an alternating ring which encloses part of the gamma chain. F(1) is attached to F(0) by a central stalk formed by the gamma and epsilon chains, while a peripheral stalk is formed by the delta and b chains.

The protein localises to the cell inner membrane. In terms of biological role, f(1)F(0) ATP synthase produces ATP from ADP in the presence of a proton or sodium gradient. F-type ATPases consist of two structural domains, F(1) containing the extramembraneous catalytic core and F(0) containing the membrane proton channel, linked together by a central stalk and a peripheral stalk. During catalysis, ATP synthesis in the catalytic domain of F(1) is coupled via a rotary mechanism of the central stalk subunits to proton translocation. Its function is as follows. Key component of the F(0) channel; it plays a direct role in translocation across the membrane. A homomeric c-ring of between 10-14 subunits forms the central stalk rotor element with the F(1) delta and epsilon subunits. This chain is ATP synthase subunit c, found in Vibrio vulnificus (strain CMCP6).